A 196-amino-acid chain; its full sequence is Large ribosomal subunit protein eL15 (196 aa).

Disordered regions lie at residues 72 to 93 (SARK…TRIT) and 163 to 196 (GLTG…GKGK).

The protein belongs to the eukaryotic ribosomal protein eL15 family. Part of the 50S ribosomal subunit. Interacts with protein L7Ae and weakly with L44e.

This chain is Large ribosomal subunit protein eL15 (rpl15e), found in Haloarcula marismortui (strain ATCC 43049 / DSM 3752 / JCM 8966 / VKM B-1809) (Halobacterium marismortui).